A 311-amino-acid chain; its full sequence is Pyrimidine-specific ribonucleoside hydrolase RihA (311 aa).

His-240 is a catalytic residue.

Belongs to the IUNH family. RihA subfamily.

In terms of biological role, hydrolyzes cytidine or uridine to ribose and cytosine or uracil, respectively. The chain is Pyrimidine-specific ribonucleoside hydrolase RihA from Shigella flexneri serotype 5b (strain 8401).